The following is a 163-amino-acid chain: uncharacterized protein (163 aa).

A helical membrane pass occupies residues 11-31; it reads LSWFLLLVVVILIFFLLLSCL.

It is found in the membrane. This is an uncharacterized protein from Saccharomyces cerevisiae (strain ATCC 204508 / S288c) (Baker's yeast).